A 264-amino-acid chain; its full sequence is Rhamnosyltransferase WbbL (264 aa).

The protein belongs to the glycosyltransferase 2 family.

It functions in the pathway bacterial outer membrane biogenesis; lipopolysaccharide biosynthesis. Functionally, rhamnosyltransferase involved in lipopolysaccharide biosynthesis. The polypeptide is Rhamnosyltransferase WbbL (wbbL) (Escherichia coli (strain K12)).